A 1013-amino-acid chain; its full sequence is Hemoglobin-binding protein A (1013 aa).

The N-terminal stretch at 1-24 (MTNFKFSLLACSIAFALNASTAYA) is a signal peptide. Repeat copies occupy residues 26-29 (QPTN), 30-33 (QPTN), 34-37 (QPTN), 38-41 (QPTN), 42-45 (QPTN), 46-49 (QPTN), 50-53 (QPTN), and 54-57 (QPTN). Positions 26–57 (QPTNQPTNQPTNQPTNQPTNQPTNQPTNQPTN) are 8 X 4 AA tandem repeats of Q-P-T-N. Low complexity predominate over residues 26 to 58 (QPTNQPTNQPTNQPTNQPTNQPTNQPTNQPTNQ). A disordered region spans residues 26–61 (QPTNQPTNQPTNQPTNQPTNQPTNQPTNQPTNQDSN). Residues 67-74 (EQINVSGS) carry the TonB box motif. The TBDR plug domain occupies 78–205 (SDSKTPPKIA…LGGSVIYKTK (128 aa)). The 801-residue stretch at 213–1013 (NKDYYVSYKK…NYKMSVQFEF (801 aa)) folds into the TBDR beta-barrel domain. Positions 996–1013 (NRFYAPGRNYKMSVQFEF) match the TonB C-terminal box motif.

Belongs to the TonB-dependent receptor family. Hemoglobin/haptoglobin binding protein subfamily.

The protein resides in the cell outer membrane. Functionally, acts as a receptor for hemoglobin of the human host and is required for heme uptake. The polypeptide is Hemoglobin-binding protein A (hgbA) (Haemophilus influenzae).